The primary structure comprises 716 residues: FLYWCH-type zinc finger-containing protein 1 (716 aa).

The segment at M1–K35 is disordered. Position 21 is a phosphoserine (S21). The segment at F116–H174 adopts an FLYWCH-type 1 zinc-finger fold. A Glycyl lysine isopeptide (Lys-Gly) (interchain with G-Cter in SUMO2) cross-link involves residue K134. The interval P191–T231 is disordered. Residues L195 to G204 show a composition bias toward low complexity. Phosphoserine is present on S261. The FLYWCH-type 2 zinc-finger motif lies at F273 to H331. S371 is modified (phosphoserine). Positions G377 to F421 are disordered. Residue K393 forms a Glycyl lysine isopeptide (Lys-Gly) (interchain with G-Cter in SUMO2) linkage. An FLYWCH-type 3 zinc finger spans residues F421 to H479. At S503 the chain carries Phosphoserine. The FLYWCH-type 4 zinc-finger motif lies at F509–H567. Position 591 is a phosphoserine (S591). Residues F600–H658 form an FLYWCH-type 5 zinc finger. Residue K685 forms a Glycyl lysine isopeptide (Lys-Gly) (interchain with G-Cter in SUMO2) linkage. The residue at position 696 (S696) is a Phosphoserine.

Interacts with CTNNB1 (when unphosphorylated), perhaps preventing interaction of CTNNB1 with TCF4, and thereby regulating transcription activation; phosphorylation of CTNNB1 may inhibit the interaction.

It localises to the nucleus. The protein resides in the chromosome. It is found in the centromere. In terms of biological role, transcription cofactor. Negatively regulates transcription activation by catenin beta-1 CTNNB1, perhaps acting by competing with TCF4 for CTNNB1 binding. May play a role in DNA-damage response signaling. Binds specifically to DNA sequences at peri-centromeric chromatin loci. The protein is FLYWCH-type zinc finger-containing protein 1 (FLYWCH1) of Homo sapiens (Human).